The primary structure comprises 418 residues: Phosphoglycerate kinase (418 aa).

(2R)-3-phosphoglycerate is bound by residues Val24, Asp25, Phe26, Asn27, Arg40, Ser63, His64, Gly66, Arg67, Leu122, Arg123, His169, and Arg170. ADP is bound at residue Gly213. Position 213 (Gly213) interacts with CDP. The AMP site is built by Ala214 and Lys215. Ala214 lines the ATP pocket. Ala214 contributes to the Mg(2+) binding site. Positions 217 and 218 each coordinate Mg(2+). Asp218 contributes to the CDP binding site. Residue Lys219 coordinates AMP. Lys219 provides a ligand contact to ATP. ADP is bound at residue Gly237. Gly237 contributes to the CDP binding site. The AMP site is built by Gly238 and Gly312. ATP is bound by residues Gly238 and Gly312. CDP-binding residues include Gly337 and Phe342. Phe342 contacts ADP. Glu343 contributes to the AMP binding site. Positions 343, 374, and 375 each coordinate ATP. Asp374 lines the Mg(2+) pocket.

The protein belongs to the phosphoglycerate kinase family. Monomer. It depends on Mg(2+) as a cofactor.

The enzyme catalyses (2R)-3-phosphoglycerate + ATP = (2R)-3-phospho-glyceroyl phosphate + ADP. The protein operates within carbohydrate degradation; glycolysis; pyruvate from D-glyceraldehyde 3-phosphate: step 2/5. The protein is Phosphoglycerate kinase (PGK) of Euplotes crassus.